The chain runs to 194 residues: Peptidyl-tRNA hydrolase (194 aa).

Tyr17 contacts tRNA. Residue His22 is the Proton acceptor of the active site. Phe68, Asn70, and Asn116 together coordinate tRNA.

This sequence belongs to the PTH family. In terms of assembly, monomer.

The protein localises to the cytoplasm. It carries out the reaction an N-acyl-L-alpha-aminoacyl-tRNA + H2O = an N-acyl-L-amino acid + a tRNA + H(+). Hydrolyzes ribosome-free peptidyl-tRNAs (with 1 or more amino acids incorporated), which drop off the ribosome during protein synthesis, or as a result of ribosome stalling. In terms of biological role, catalyzes the release of premature peptidyl moieties from peptidyl-tRNA molecules trapped in stalled 50S ribosomal subunits, and thus maintains levels of free tRNAs and 50S ribosomes. The protein is Peptidyl-tRNA hydrolase of Actinobacillus succinogenes (strain ATCC 55618 / DSM 22257 / CCUG 43843 / 130Z).